Reading from the N-terminus, the 486-residue chain is Aromatic-L-amino-acid decarboxylase (486 aa).

Met-1 is subject to N-acetylmethionine. 2 repeat units span residues 58-115 (QDVE…TELE) and 118-178 (MMDW…TQGA). Positions 58–178 (QDVEKIIMPG…AASPGLTQGA (121 aa)) are 2 X approximate tandem repeats. Thr-82 is a binding site for substrate. 2 residues coordinate pyridoxal 5'-phosphate: Ala-148 and Ser-149. His-192 is a substrate binding site. Pyridoxal 5'-phosphate is bound by residues Thr-246 and Asn-300. An N6-(pyridoxal phosphate)lysine modification is found at Lys-303.

The protein belongs to the group II decarboxylase family. Homodimer. The cofactor is pyridoxal 5'-phosphate.

It carries out the reaction L-dopa + H(+) = dopamine + CO2. The catalysed reaction is 5-hydroxy-L-tryptophan + H(+) = serotonin + CO2. It functions in the pathway catecholamine biosynthesis; dopamine biosynthesis; dopamine from L-tyrosine: step 2/2. In terms of biological role, catalyzes the decarboxylation of L-3,4-dihydroxyphenylalanine (DOPA) to dopamine and L-5-hydroxytryptophan to serotonin. This Sus scrofa (Pig) protein is Aromatic-L-amino-acid decarboxylase (DDC).